Reading from the N-terminus, the 314-residue chain is GTP cyclohydrolase FolE2 (314 aa).

Residues 290 to 314 (DASAWSAPQASAPDQQESFATGNER) form a disordered region. The span at 291–305 (ASAWSAPQASAPDQQ) shows a compositional bias: low complexity.

It belongs to the GTP cyclohydrolase IV family.

It catalyses the reaction GTP + H2O = 7,8-dihydroneopterin 3'-triphosphate + formate + H(+). It participates in cofactor biosynthesis; 7,8-dihydroneopterin triphosphate biosynthesis; 7,8-dihydroneopterin triphosphate from GTP: step 1/1. Functionally, converts GTP to 7,8-dihydroneopterin triphosphate. This Pseudomonas putida (strain ATCC 700007 / DSM 6899 / JCM 31910 / BCRC 17059 / LMG 24140 / F1) protein is GTP cyclohydrolase FolE2.